Reading from the N-terminus, the 335-residue chain is Holliday junction branch migration complex subunit RuvB (335 aa).

Residues 1-181 (MDRIVEIEKY…FGMQFRLEFY (181 aa)) are large ATPase domain (RuvB-L). ATP-binding positions include Leu20, Arg21, Gly62, Lys65, Thr66, Thr67, 128 to 130 (EDY), Arg171, Tyr181, and Arg218. Thr66 is a Mg(2+) binding site. A small ATPAse domain (RuvB-S) region spans residues 182 to 252 (KDSELALILQ…RANEALNSLG (71 aa)). The interval 255 to 335 (ELGFDAMDLR…LNYEKTLFEE (81 aa)) is head domain (RuvB-H). Positions 309 and 314 each coordinate DNA.

This sequence belongs to the RuvB family. Homohexamer. Forms an RuvA(8)-RuvB(12)-Holliday junction (HJ) complex. HJ DNA is sandwiched between 2 RuvA tetramers; dsDNA enters through RuvA and exits via RuvB. An RuvB hexamer assembles on each DNA strand where it exits the tetramer. Each RuvB hexamer is contacted by two RuvA subunits (via domain III) on 2 adjacent RuvB subunits; this complex drives branch migration. In the full resolvosome a probable DNA-RuvA(4)-RuvB(12)-RuvC(2) complex forms which resolves the HJ.

The protein localises to the cytoplasm. It carries out the reaction ATP + H2O = ADP + phosphate + H(+). In terms of biological role, the RuvA-RuvB-RuvC complex processes Holliday junction (HJ) DNA during genetic recombination and DNA repair, while the RuvA-RuvB complex plays an important role in the rescue of blocked DNA replication forks via replication fork reversal (RFR). RuvA specifically binds to HJ cruciform DNA, conferring on it an open structure. The RuvB hexamer acts as an ATP-dependent pump, pulling dsDNA into and through the RuvAB complex. RuvB forms 2 homohexamers on either side of HJ DNA bound by 1 or 2 RuvA tetramers; 4 subunits per hexamer contact DNA at a time. Coordinated motions by a converter formed by DNA-disengaged RuvB subunits stimulates ATP hydrolysis and nucleotide exchange. Immobilization of the converter enables RuvB to convert the ATP-contained energy into a lever motion, pulling 2 nucleotides of DNA out of the RuvA tetramer per ATP hydrolyzed, thus driving DNA branch migration. The RuvB motors rotate together with the DNA substrate, which together with the progressing nucleotide cycle form the mechanistic basis for DNA recombination by continuous HJ branch migration. Branch migration allows RuvC to scan DNA until it finds its consensus sequence, where it cleaves and resolves cruciform DNA. The protein is Holliday junction branch migration complex subunit RuvB of Campylobacter jejuni subsp. doylei (strain ATCC BAA-1458 / RM4099 / 269.97).